The sequence spans 273 residues: Peroxiredoxin-4 (273 aa).

The N-terminal stretch at 1–40 (METWSKLLDGTTPSRRWRKLVLLLPPLLLFLLQTEALQGL) is a signal peptide. In terms of domain architecture, Thioredoxin spans 81–239 (AKISKPAPYW…TLRLVQAFQY (159 aa)). Residue C126 is the Cysteine sulfenic acid (-SOH) intermediate of the active site.

It belongs to the peroxiredoxin family. AhpC/Prx1 subfamily. As to quaternary structure, homodimer; disulfide-linked, upon oxidation. 5 homodimers assemble to form a ring-like decamer. The enzyme can be inactivated by further oxidation of the cysteine sulfenic acid (C(P)-SOH) to sulphinic acid (C(P)-SO2H) and sulphonic acid (C(P)-SO3H) instead of its condensation to a disulfide bond.

The protein resides in the cytoplasm. It localises to the endoplasmic reticulum. Its subcellular location is the secreted. The catalysed reaction is a hydroperoxide + [thioredoxin]-dithiol = an alcohol + [thioredoxin]-disulfide + H2O. Functionally, thiol-specific peroxidase that catalyzes the reduction of hydrogen peroxide and organic hydroperoxides to water and alcohols, respectively. Plays a role in cell protection against oxidative stress by detoxifying peroxides and as sensor of hydrogen peroxide-mediated signaling events. Regulates the activation of NF-kappa-B in the cytosol by a modulation of I-kappa-B-alpha phosphorylation. This is Peroxiredoxin-4 (Prdx4) from Rattus norvegicus (Rat).